Here is a 192-residue protein sequence, read N- to C-terminus: ATP synthase protein MI25 (192 aa).

A helical membrane pass occupies residues 29-49 (ISIYNEEMIVARCFIGFLIFS).

Belongs to the ATPase protein MI25 family. As to quaternary structure, F-type ATPases have 2 components, CF(1) - the catalytic core - and CF(0) - the membrane proton channel. CF(1) has five subunits: alpha(3), beta(3), gamma(1), delta(1), epsilon(1). CF(0) has three main subunits: a, b and c.

It is found in the mitochondrion membrane. This is one of the chains of the nonenzymatic component (CF(0) subunit) of the mitochondrial ATPase complex. This is ATP synthase protein MI25 from Triticum timopheevii (Timopheev's wheat).